Reading from the N-terminus, the 88-residue chain is Actobindin (88 aa).

Met-1 carries the N-acetylmethionine modification. A disordered region spans residues 1 to 22 (MNPELQSAIGQGAALKHAETVD). N6,N6,N6-trimethyllysine is present on Lys-35. Residues 37 to 54 (DRSSFLEEVAKPHELKHA) form the WH2 domain. The residue at position 72 (Lys-72) is an N6,N6,N6-trimethyllysine.

In terms of assembly, monomer.

Functionally, is able to bind two actin monomers at high concentrations of G-actin. This chain is Actobindin, found in Acanthamoeba castellanii (Amoeba).